Reading from the N-terminus, the 128-residue chain is Large ribosomal subunit protein bL12 (128 aa).

The protein belongs to the bacterial ribosomal protein bL12 family. As to quaternary structure, homodimer. Part of the ribosomal stalk of the 50S ribosomal subunit. Forms a multimeric L10(L12)X complex, where L10 forms an elongated spine to which 2 to 4 L12 dimers bind in a sequential fashion. Binds GTP-bound translation factors.

Its function is as follows. Forms part of the ribosomal stalk which helps the ribosome interact with GTP-bound translation factors. Is thus essential for accurate translation. This is Large ribosomal subunit protein bL12 from Desulfosudis oleivorans (strain DSM 6200 / JCM 39069 / Hxd3) (Desulfococcus oleovorans).